Consider the following 83-residue polypeptide: Mu-theraphotoxin-Hhn2c (83 aa).

The signal sequence occupies residues 1–21 (MKASMFLALAGLVLLFVVGYA). The propeptide occupies 22 to 48 (SESEEKEFPIELLSKIFAVDVFKGEER). 3 disulfides stabilise this stretch: Cys-50-Cys-65, Cys-57-Cys-70, and Cys-64-Cys-77. Position 81 is a leucine amide (Leu-81).

It belongs to the neurotoxin 10 (Hwtx-1) family. 15 (Hntx-3) subfamily. In terms of assembly, monomer. As to expression, expressed by the venom gland.

It localises to the secreted. In terms of biological role, lethal neurotoxin. Selectively blocks tetrodotoxin-sensitive voltage-gated sodium channels (Nav). Does not affect tetrodotoxin-resistant voltage-gated sodium channels or calcium channels. This chain is Mu-theraphotoxin-Hhn2c, found in Cyriopagopus hainanus (Chinese bird spider).